A 227-amino-acid polypeptide reads, in one-letter code: Iron-regulated surface determinant protein C (227 aa).

Residues 1 to 28 form the signal peptide; the sequence is MKNILKVFNTTILALIIIIATFSNSANA. Residues 29-150 form the NEAT domain; sequence ADSGTLNYEV…KFNGPTDVAG (122 aa). Residues Ser-47, Ile-48, Tyr-132, and Tyr-136 each coordinate heme. The tract at residues 149-191 is disordered; the sequence is AGANAPGKDDKNSASGSDKGSDGATTGQSESNSSNKDKVENPQ. Residues 161-172 are compositionally biased toward low complexity; the sequence is SASGSDKGSDGA. Residues 173 to 182 show a composition bias toward polar residues; that stretch reads TTGQSESNSS. Residues 189 to 193 carry the NPQTN sorting signal motif; that stretch reads NPQTN. Residue Thr-192 is modified to Pentaglycyl murein peptidoglycan amidated threonine. The propeptide at 193-227 is removed by sortase B; that stretch reads NAGTPAYIYAIPVASLALLIAITLFVRKKSKGNVE.

Belongs to the IsdC family. Monomer. Interacts with IsdA.

The protein resides in the secreted. It is found in the cell wall. Involved in heme (porphyrin) scavenging. Binds hemoglobin and almost exclusively free-base protoporphyrin IX. Probably has a role as the central conduit of the isd heme uptake system, i.e. mediates the transfer of the iron-containing nutrient from IsdABH to the membrane translocation system IsdDEF. Hemin-free IsdC (apo-IsdC) acquires hemin from hemin-containing IsdA (holo-IsdA) probably through the activated holo-IsdA-apo-IsdC complex and due to the higher affinity of apo-IsdC for the cofactor. The reaction is reversible. The sequence is that of Iron-regulated surface determinant protein C (isdC) from Staphylococcus aureus (strain bovine RF122 / ET3-1).